The sequence spans 147 residues: 3-hydroxyacyl-[acyl-carrier-protein] dehydratase FabZ (147 aa).

His-49 is an active-site residue.

Belongs to the thioester dehydratase family. FabZ subfamily.

It is found in the cytoplasm. The enzyme catalyses a (3R)-hydroxyacyl-[ACP] = a (2E)-enoyl-[ACP] + H2O. Involved in unsaturated fatty acids biosynthesis. Catalyzes the dehydration of short chain beta-hydroxyacyl-ACPs and long chain saturated and unsaturated beta-hydroxyacyl-ACPs. The polypeptide is 3-hydroxyacyl-[acyl-carrier-protein] dehydratase FabZ (Alkaliphilus metalliredigens (strain QYMF)).